A 317-amino-acid polypeptide reads, in one-letter code: Petrobactin-binding protein YclQ (317 aa).

Positions 1–19 (MKKFALLFIALVTAVVISA) are cleaved as a signal peptide. Cys-20 carries N-palmitoyl cysteine lipidation. A lipid anchor (S-diacylglycerol cysteine) is attached at Cys-20. Residues 56-317 (KVVVFDFGSL…IKEVKDGLEK (262 aa)) enclose the Fe/B12 periplasmic-binding domain.

It belongs to the bacterial solute-binding protein 8 family. As to quaternary structure, the complex is composed of two ATP-binding proteins (YclP), two transmembrane proteins (YclN and YclO) and a solute-binding protein (YclQ). Interacts with FloT.

It is found in the cell membrane. The protein localises to the membrane raft. Functionally, part of the ABC transporter complex YclNOPQ involved in uptake of ferric-petrobactin. Petrobactin is a photoreactive 3,4-catecholate siderophore produced by many members of the B.cereus group, including B.anthracis. Binds selectively iron-free and ferric petrobactin and the petrobactin precursor 3,4-dihydroxybenzoic acid (3,4-DHB). In Bacillus subtilis (strain 168), this protein is Petrobactin-binding protein YclQ (yclQ).